The sequence spans 544 residues: uncharacterized protein (544 aa).

This is an uncharacterized protein from Acanthamoeba polyphaga mimivirus (APMV).